Here is a 325-residue protein sequence, read N- to C-terminus: Ribosomal RNA small subunit methyltransferase H (325 aa).

Residues Gly32–His34, Asp52, Phe79, Asp100, and Gln107 contribute to the S-adenosyl-L-methionine site.

Belongs to the methyltransferase superfamily. RsmH family.

It is found in the cytoplasm. It catalyses the reaction cytidine(1402) in 16S rRNA + S-adenosyl-L-methionine = N(4)-methylcytidine(1402) in 16S rRNA + S-adenosyl-L-homocysteine + H(+). Functionally, specifically methylates the N4 position of cytidine in position 1402 (C1402) of 16S rRNA. In Oceanobacillus iheyensis (strain DSM 14371 / CIP 107618 / JCM 11309 / KCTC 3954 / HTE831), this protein is Ribosomal RNA small subunit methyltransferase H.